We begin with the raw amino-acid sequence, 418 residues long: Inward rectifier potassium channel 16 (418 aa).

Topologically, residues Met1–Asp67 are cytoplasmic. A helical membrane pass occupies residues Thr68 to Leu94. Residues Ile95–Ser117 are Extracellular-facing. Residues Phe118–Tyr134 constitute an intramembrane region (helical; Pore-forming). The short motif at Thr131–Tyr136 is the Selectivity filter element. Topologically, residues Gly135–Cys143 are extracellular. A helical membrane pass occupies residues Ser144–Lys171. At Met172–Met418 the chain is on the cytoplasmic side. Phosphoserine is present on residues Ser373 and Ser375.

This sequence belongs to the inward rectifier-type potassium channel (TC 1.A.2.1) family. KCNJ16 subfamily. As to quaternary structure, it forms heteromeric channels with Kir4.1/KCNJ10; this interaction is required for KCNJ16 localization to the basolateral membrane in kidney cells. As a heteromer with KCNJ10, may interact with MAGI1; this interaction may facilitate KCNJ10/KCNJ16 potassium channel expression at the basolateral membrane in kidney cells. May form heteromers with Kir2.1/KCNJ2. Can form heteromeric channels with Kir4.2/KCNJ15. Widely expressed, with highest levels in adult and fetal kidney (at protein level). In the kidney, expressed in the proximal and distal convoluted tubules, but not in glomeruli nor collecting ducts.

The protein localises to the membrane. It localises to the basolateral cell membrane. It catalyses the reaction K(+)(in) = K(+)(out). Its activity is regulated as follows. Channel activity is strongly regulated by variations of cytosolic pH; channels are activated by alkaline and inhibited by acidic pH values. Activated by phosphatidylinositol 4,5 biphosphate (PtdIns(4,5)P2). Functionally, inward rectifier potassium channels are characterized by a greater tendency to allow potassium to flow into the cell rather than out of it. Their voltage dependence is regulated by the concentration of extracellular potassium; as external potassium is raised, the voltage range of the channel opening shifts to more positive voltages. The inward rectification is mainly due to the blockage of outward current by internal magnesium. KCNJ16 may be involved in the regulation of fluid and pH balance. In the kidney, together with KCNJ10, mediates basolateral K(+) recycling in distal tubules; this process is critical for Na(+) reabsorption at the tubules. This Homo sapiens (Human) protein is Inward rectifier potassium channel 16 (KCNJ16).